A 195-amino-acid polypeptide reads, in one-letter code: Probable GTP-binding protein EngB (195 aa).

One can recognise an EngB-type G domain in the interval 22–195 (QLPEIALAGR…WSALSRYIKR (174 aa)). GTP is bound by residues 30–37 (GRSNVGKS), 57–61 (GKTQT), 75–78 (DVPG), 142–145 (TKLD), and 174–176 (FSA). Mg(2+) is bound by residues Ser-37 and Thr-59.

The protein belongs to the TRAFAC class TrmE-Era-EngA-EngB-Septin-like GTPase superfamily. EngB GTPase family. Mg(2+) is required as a cofactor.

Necessary for normal cell division and for the maintenance of normal septation. This chain is Probable GTP-binding protein EngB, found in Oceanobacillus iheyensis (strain DSM 14371 / CIP 107618 / JCM 11309 / KCTC 3954 / HTE831).